A 261-amino-acid chain; its full sequence is Auxin-responsive protein IAA10 (261 aa).

Residues 1-43 are disordered; sequence MNGLQEVCSSSGSVMIGLPAEEDENAAHSSEDSSCPDESVSET. Positions 45–49 match the EAR-like (transcriptional repression) motif; it reads LDLAL. Residues 62–90 are disordered; it reads LSSSSSSLTRESGTKRSADSSPAAASNAT. The span at 80 to 89 shows a compositional bias: low complexity; sequence DSSPAAASNA. The region spanning 151–253 is the PB1 domain; it reads SMLVKVTMDG…SVTRLRIMKT (103 aa).

The protein belongs to the Aux/IAA family. In terms of assembly, homodimers and heterodimers. Preferentially expressed in vegetative organs.

The protein localises to the nucleus. In terms of biological role, aux/IAA proteins are short-lived transcriptional factors that function as repressors of early auxin response genes at low auxin concentrations. Repression is thought to result from the interaction with auxin response factors (ARFs), proteins that bind to the auxin-responsive promoter element (AuxRE). Formation of heterodimers with ARF proteins may alter their ability to modulate early auxin response genes expression. The protein is Auxin-responsive protein IAA10 (IAA10) of Arabidopsis thaliana (Mouse-ear cress).